Consider the following 119-residue polypeptide: MDYVSLLNQFWQKQIKSYKETPSQYHYLYPPRFFYKPVLGNLQHPTKWCCTIKFYEYSAQATECTKASAKQDAARLICEQLQAAGLLNGMELRFRSSASDIFGQNRYDASKSYFFSKTA.

Residues 2–83 enclose the DRBM domain; it reads DYVSLLNQFW…ARLICEQLQA (82 aa).

In terms of assembly, interacts with host RUNX1 isoform b.

The protein resides in the host nucleus. It is found in the host nucleolus. It localises to the host mitochondrion. Its function is as follows. Induces host cell G0/G1 arrest and apoptosis. The protein is Non-structural protein 3b of Tylonycteris pachypus (Lesser bamboo bat).